The sequence spans 374 residues: Relaxin-3 receptor 2 (374 aa).

Residues M1 to A43 lie on the Extracellular side of the membrane. N-linked (GlcNAc...) asparagine glycans are attached at residues N5 and N17. The helical transmembrane segment at L44–L64 threads the bilayer. At S65–T78 the chain is on the cytoplasmic side. A helical transmembrane segment spans residues F79–A99. The Extracellular portion of the chain corresponds to E100–M116. A disulfide bridge links C114 with C191. The helical transmembrane segment at V117–V137 threads the bilayer. Over A138–S154 the chain is Cytoplasmic. The chain crosses the membrane as a helical span at residues L155 to P175. The Extracellular segment spans residues T176–V209. Residues V210–F230 traverse the membrane as a helical segment. Residues L231–R249 are Cytoplasmic-facing. The chain crosses the membrane as a helical span at residues I250–V270. Topologically, residues L271–S281 are extracellular. The helical transmembrane segment at T282 to S302 threads the bilayer. The Cytoplasmic segment spans residues C303 to G374.

Belongs to the G-protein coupled receptor 1 family. As to expression, expressed in a broader range of tissues including brain, kidney, testis, thymus, placenta, prostate, salivary gland, thyroid and colon.

Its subcellular location is the cell membrane. High affinity receptor for INSL5. Also acts as a receptor for RLN3/relaxin-3, as well as bradykinin and kallidin. Binding of the ligand inhibit cAMP accumulation. This chain is Relaxin-3 receptor 2 (RXFP4), found in Homo sapiens (Human).